The chain runs to 139 residues: Large ribosomal subunit protein uL16c (139 aa).

The protein belongs to the universal ribosomal protein uL16 family. As to quaternary structure, part of the 50S ribosomal subunit.

The protein resides in the plastid. Its subcellular location is the chloroplast. This chain is Large ribosomal subunit protein uL16c, found in Cicer arietinum (Chickpea).